The primary structure comprises 475 residues: MSGKTLYDKLWDSHLVQQRDDGSALIYIDLQLLHEVTSPQAFEGLRLAGRKPWRVSSSLATPDHNVPTTKKERISGVDGIEDPVSKIQVTTLDDNCNEFGITEFNMKDIRQGIVHVVGPEQGATLPGMTVVCGDSHTSTHGAFGALAHGIGTSEVEHVLATQCLVQKKSRNMLVRVDGELSPWVSAKDVVLAIIGAIGTAGGTGYAIEFGGTGIQSLSMEGRMTVCNMAIEAGARVGLIAVDDTTIEYVKGRPYAPKGEHWEMAVEAWKDLVSDKDAQFDEVVVIKAEDIKPQVTWGTSPEMVIAIDEPIPRAEDQKDPVKKEGYARAWKYMGLEGKSMLSDIVLDRVFIGSCTNSRIEDLRIAAQVVKGRKVASTLKQAIVVPGSGLVKAQAEKEGLHEIFEAAGLEWREPGCSMCLAMNADKLGAGEHSASTSNRNFEGRQGFGGRTHLVSPAMAAAAAIAGHFVDVNEFVKH.

[4Fe-4S] cluster is bound by residues Cys-353, Cys-414, and Cys-417.

It belongs to the aconitase/IPM isomerase family. LeuC type 1 subfamily. In terms of assembly, heterodimer of LeuC and LeuD. Requires [4Fe-4S] cluster as cofactor.

The enzyme catalyses (2R,3S)-3-isopropylmalate = (2S)-2-isopropylmalate. Its pathway is amino-acid biosynthesis; L-leucine biosynthesis; L-leucine from 3-methyl-2-oxobutanoate: step 2/4. Functionally, catalyzes the isomerization between 2-isopropylmalate and 3-isopropylmalate, via the formation of 2-isopropylmaleate. In Marinomonas sp. (strain MWYL1), this protein is 3-isopropylmalate dehydratase large subunit.